We begin with the raw amino-acid sequence, 340 residues long: Selenide, water dikinase (340 aa).

The active site involves Cys13. ATP contacts are provided by residues Lys16 and 43 to 45 (ASD). Asp46 is a Mg(2+) binding site. Residues Asp63, Asp86, and 133-135 (GHS) each bind ATP. Asp86 contributes to the Mg(2+) binding site. Asp221 is a Mg(2+) binding site.

Belongs to the selenophosphate synthase 1 family. Class I subfamily. In terms of assembly, homodimer. It depends on Mg(2+) as a cofactor.

The catalysed reaction is hydrogenselenide + ATP + H2O = selenophosphate + AMP + phosphate + 2 H(+). Its function is as follows. Synthesizes selenophosphate from selenide and ATP. In Desulfitobacterium hafniense (strain Y51), this protein is Selenide, water dikinase.